Consider the following 228-residue polypeptide: Small ribosomal subunit protein uS3 (228 aa).

The KH type-2 domain maps to 39 to 107 (VREYLQDKLK…PVHINIEEIR (69 aa)).

This sequence belongs to the universal ribosomal protein uS3 family. Part of the 30S ribosomal subunit. Forms a tight complex with proteins S10 and S14.

Functionally, binds the lower part of the 30S subunit head. Binds mRNA in the 70S ribosome, positioning it for translation. The protein is Small ribosomal subunit protein uS3 of Pseudomonas aeruginosa (strain UCBPP-PA14).